We begin with the raw amino-acid sequence, 404 residues long: Glycosylated lysosomal membrane protein B (404 aa).

The N-terminal stretch at 1 to 24 (MSCTRGWRLILLGLLCVGLLGTRG) is a signal peptide. The Lumenal portion of the chain corresponds to 25–364 (QDESRKVSVQ…YGDPPRDSFS (340 aa)). N-linked (GlcNAc...) asparagine glycosylation is found at N85, N124, N128, N142, N152, N156, N163, N168, N178, N189, N205, N221, N266, N303, and N330. Residues 365-385 (ILVICIMAVALGTPLLLLIIG) traverse the membrane as a helical segment. Residues 386-404 (TVLVTAVRHKVYPNYQPIN) are Cytoplasmic-facing. The Lysosomal targeting motif motif lies at 400-404 (YQPIN).

Belongs to the GLMP family. In terms of assembly, interacts (via lumenal domain) with lysosomal protein MFSD1; the interaction starts while both proteins are still in the endoplasmic reticulum and is required for stabilization of MFSD1 in lysosomes but has no direct effect on its targeting to lysosomes or transporter activity.

The protein localises to the lysosome membrane. Functionally, required to protect lysosomal transporter MFSD1 from lysosomal proteolysis and for MFSD1 lysosomal localization. The sequence is that of Glycosylated lysosomal membrane protein B (glmp-b) from Xenopus laevis (African clawed frog).